Here is a 330-residue protein sequence, read N- to C-terminus: Beta-ketoacyl-[acyl-carrier-protein] synthase III (330 aa).

Residues cysteine 116 and histidine 257 contribute to the active site. An ACP-binding region spans residues 258–262; the sequence is QANQR. The active site involves asparagine 287.

This sequence belongs to the thiolase-like superfamily. FabH family. As to quaternary structure, homodimer.

Its subcellular location is the cytoplasm. The catalysed reaction is malonyl-[ACP] + acetyl-CoA + H(+) = 3-oxobutanoyl-[ACP] + CO2 + CoA. It functions in the pathway lipid metabolism; fatty acid biosynthesis. Functionally, catalyzes the condensation reaction of fatty acid synthesis by the addition to an acyl acceptor of two carbons from malonyl-ACP. Catalyzes the first condensation reaction which initiates fatty acid synthesis and may therefore play a role in governing the total rate of fatty acid production. Possesses both acetoacetyl-ACP synthase and acetyl transacylase activities. Its substrate specificity determines the biosynthesis of branched-chain and/or straight-chain of fatty acids. The chain is Beta-ketoacyl-[acyl-carrier-protein] synthase III from Synechocystis sp. (strain ATCC 27184 / PCC 6803 / Kazusa).